An 89-amino-acid polypeptide reads, in one-letter code: Small ribosomal subunit protein uS15 (89 aa).

The protein belongs to the universal ribosomal protein uS15 family. As to quaternary structure, part of the 30S ribosomal subunit. Forms a bridge to the 50S subunit in the 70S ribosome, contacting the 23S rRNA.

In terms of biological role, one of the primary rRNA binding proteins, it binds directly to 16S rRNA where it helps nucleate assembly of the platform of the 30S subunit by binding and bridging several RNA helices of the 16S rRNA. Forms an intersubunit bridge (bridge B4) with the 23S rRNA of the 50S subunit in the ribosome. In Kocuria rhizophila (strain ATCC 9341 / DSM 348 / NBRC 103217 / DC2201), this protein is Small ribosomal subunit protein uS15.